Consider the following 303-residue polypeptide: MPEASSPRRTPQNVPYQDLPHLVNADGQYLFCRYWKPSGTPKALIFVSHGAGEHCGRYDELAQMLKRLDMLVFAHDHVGHGQSEGERMVVSDFQVFVRDLLQHVNTVQKDYPEVPVFLLGHSMGGAISILAAAERPTHFSGMILISPLILANPESASTLKVLAAKLLNFVLPNISLGRIDSSVLSRNKSEVDLYNSDPLICHAGVKVCFGIQLLNAVSRVERAMPRLTLPFLLLQGSADRLCDSKGAYLLMESSPSQDKTLKMYEGAYHVLHKELPEVTNSVLHEINTWVSHRIAVAGARCLP.

Phosphothreonine is present on Thr10. Residue Tyr58 is modified to 3'-nitrotyrosine. Ser122 acts as the Nucleophile in catalysis. The residue at position 189 (Ser189) is a Phosphoserine. Active-site charge relay system residues include Asp239 and His269.

The protein belongs to the AB hydrolase superfamily. Monoacylglycerol lipase family. In terms of assembly, homodimer. In terms of tissue distribution, ubiquitous. Highly expressed in adipose tissue, adrenal gland, ovary, heart, spleen, lung, skeletal muscle, kidney and testis. Highly expressed throughout the brain.

The protein resides in the cytoplasm. It localises to the cytosol. The protein localises to the membrane. The enzyme catalyses Hydrolyzes glycerol monoesters of long-chain fatty acids.. It catalyses the reaction a 1-acylglycerol + H2O = glycerol + a fatty acid + H(+). The catalysed reaction is a 2-acylglycerol + H2O = glycerol + a fatty acid + H(+). It carries out the reaction 1-octanoylglycerol + H2O = octanoate + glycerol + H(+). The enzyme catalyses 2-(5Z,8Z,11Z,14Z-eicosatetraenoyl)-glycerol + H2O = glycerol + (5Z,8Z,11Z,14Z)-eicosatetraenoate + H(+). It catalyses the reaction 1-decanoylglycerol + H2O = decanoate + glycerol + H(+). The catalysed reaction is 1-dodecanoylglycerol + H2O = dodecanoate + glycerol + H(+). It carries out the reaction 1-tetradecanoylglycerol + H2O = tetradecanoate + glycerol + H(+). The enzyme catalyses 2-hexadecanoylglycerol + H2O = glycerol + hexadecanoate + H(+). It catalyses the reaction 1-(9Z-octadecenoyl)-glycerol + H2O = glycerol + (9Z)-octadecenoate + H(+). The catalysed reaction is 2-(9Z-octadecenoyl)-glycerol + H2O = glycerol + (9Z)-octadecenoate + H(+). It carries out the reaction 2-(9Z,12Z-octadecadienoyl)-glycerol + H2O = (9Z,12Z)-octadecadienoate + glycerol + H(+). The enzyme catalyses 1-(5Z,8Z,11Z,14Z-eicosatetraenoyl)-glycerol + H2O = glycerol + (5Z,8Z,11Z,14Z)-eicosatetraenoate + H(+). It catalyses the reaction 1-(9Z,12Z-octadecadienoyl)-glycerol + H2O = (9Z,12Z)-octadecadienoate + glycerol + H(+). The catalysed reaction is 1-hexadecanoylglycerol + H2O = glycerol + hexadecanoate + H(+). It carries out the reaction 1-octadecanoylglycerol + H2O = octadecanoate + glycerol + H(+). The enzyme catalyses prostaglandin E2 1-glyceryl ester + H2O = prostaglandin E2 + glycerol + H(+). It catalyses the reaction prostaglandin D2-1-glycerol ester + H2O = prostaglandin D2 + glycerol + H(+). The catalysed reaction is 2-glyceryl-15-deoxy-Delta(12,14)-prostaglandin J2 + H2O = 15-deoxy-Delta(12,14)-prostaglandin J2 + glycerol + H(+). It carries out the reaction prostaglandin F2alpha 1-glyceryl ester + H2O = prostaglandin F2alpha + glycerol + H(+). It participates in glycerolipid metabolism; triacylglycerol degradation. Its function is as follows. Converts monoacylglycerides to free fatty acids and glycerol. Hydrolyzes the endocannabinoid 2-arachidonoylglycerol, and thereby contributes to the regulation of endocannabinoid signaling, nociperception and perception of pain. Regulates the levels of fatty acids that serve as signaling molecules and promote cancer cell migration, invasion and tumor growth. The sequence is that of Monoglyceride lipase from Rattus norvegicus (Rat).